The following is a 170-amino-acid chain: RNA pyrophosphohydrolase (170 aa).

The 154-residue stretch at 9-162 (PYRPCAGIMV…KRAVYEKVVA (154 aa)) folds into the Nudix hydrolase domain. The Nudix box motif lies at 50–71 (GGIDDGERPLTAAIRELYEETG).

It belongs to the Nudix hydrolase family. RppH subfamily. A divalent metal cation serves as cofactor.

In terms of biological role, accelerates the degradation of transcripts by removing pyrophosphate from the 5'-end of triphosphorylated RNA, leading to a more labile monophosphorylated state that can stimulate subsequent ribonuclease cleavage. This is RNA pyrophosphohydrolase from Agrobacterium fabrum (strain C58 / ATCC 33970) (Agrobacterium tumefaciens (strain C58)).